Consider the following 27-residue polypeptide: Caerulein precursor fragment R5 (27 aa).

In terms of tissue distribution, expressed by the skin glands.

It is found in the secreted. Antimicrobial peptide. The chain is Caerulein precursor fragment R5 from Xenopus ruwenzoriensis (Uganda clawed frog).